The primary structure comprises 435 residues: Histidinol dehydrogenase (435 aa).

Y131, Q189, and N212 together coordinate NAD(+). 3 residues coordinate substrate: S238, Q260, and H263. Zn(2+)-binding residues include Q260 and H263. Residues E327 and H328 each act as proton acceptor in the active site. Residues H328, D361, E415, and H420 each contribute to the substrate site. D361 serves as a coordination point for Zn(2+). H420 contacts Zn(2+).

This sequence belongs to the histidinol dehydrogenase family. As to quaternary structure, homodimer. The cofactor is Zn(2+).

It carries out the reaction L-histidinol + 2 NAD(+) + H2O = L-histidine + 2 NADH + 3 H(+). It participates in amino-acid biosynthesis; L-histidine biosynthesis; L-histidine from 5-phospho-alpha-D-ribose 1-diphosphate: step 9/9. Its function is as follows. Catalyzes the sequential NAD-dependent oxidations of L-histidinol to L-histidinaldehyde and then to L-histidine. This chain is Histidinol dehydrogenase (hisD), found in Buchnera aphidicola subsp. Schizaphis graminum (strain Sg).